A 156-amino-acid chain; its full sequence is Probable cyclic pyranopterin monophosphate synthase (156 aa).

Substrate-binding positions include 74–76 (LCH) and 110–111 (ME). Asp125 is an active-site residue.

The protein belongs to the MoaC family. In terms of assembly, homohexamer; trimer of dimers.

It catalyses the reaction (8S)-3',8-cyclo-7,8-dihydroguanosine 5'-triphosphate = cyclic pyranopterin phosphate + diphosphate. Its pathway is cofactor biosynthesis; molybdopterin biosynthesis. Its function is as follows. Catalyzes the conversion of (8S)-3',8-cyclo-7,8-dihydroguanosine 5'-triphosphate to cyclic pyranopterin monophosphate (cPMP). This Thermococcus onnurineus (strain NA1) protein is Probable cyclic pyranopterin monophosphate synthase.